The chain runs to 306 residues: Curved DNA-binding protein (306 aa).

In terms of domain architecture, J spans 5–69 (DYYAIMGVKP…QRRAEYDQMW (65 aa)).

It localises to the cytoplasm. Its subcellular location is the nucleoid. In terms of biological role, DNA-binding protein that preferentially recognizes a curved DNA sequence. It is probably a functional analog of DnaJ; displays overlapping activities with DnaJ, but functions under different conditions, probably acting as a molecular chaperone in an adaptive response to environmental stresses other than heat shock. Lacks autonomous chaperone activity; binds native substrates and targets them for recognition by DnaK. Its activity is inhibited by the binding of CbpM. The chain is Curved DNA-binding protein from Escherichia coli O7:K1 (strain IAI39 / ExPEC).